The primary structure comprises 552 residues: Phosphoglucomutase (552 aa).

S135 (phosphoserine intermediate) is an active-site residue. Mg(2+)-binding residues include S135, D289, D291, and D293.

Belongs to the phosphohexose mutase family. Mg(2+) is required as a cofactor.

The enzyme catalyses alpha-D-glucose 1-phosphate = alpha-D-glucose 6-phosphate. The protein operates within glycolipid metabolism; diglucosyl-diacylglycerol biosynthesis. Functionally, catalyzes the interconversion between glucose-6-phosphate and alpha-glucose-1-phosphate. This is the first step in the biosynthesis of diglucosyl-diacylglycerol (Glc2-DAG), i.e. a glycolipid found in the membrane, which is also used as a membrane anchor for lipoteichoic acid (LTA). The polypeptide is Phosphoglucomutase (pgcA) (Staphylococcus saprophyticus subsp. saprophyticus (strain ATCC 15305 / DSM 20229 / NCIMB 8711 / NCTC 7292 / S-41)).